Reading from the N-terminus, the 962-residue chain is Phagocyte signaling-impaired protein (962 aa).

TPR repeat units follow at residues L45–D78, D79–N112, and Q523–S560. Positions T856–S880 are disordered.

Belongs to the MDM20/NAA25 family. As to quaternary structure, component of the N-terminal acetyltransferase B (NatB) complex.

The protein localises to the lysosome. Functionally, non-catalytic subunit of the NatB complex which catalyzes acetylation of the N-terminal methionine residues of proteins beginning with Met-Asp or Met-Glu. Has 2 roles in the larval immune response: required both for the phagocytic degradation of internalized bacteria and for the induction of Defensin in the fat body. Within the phagocytic blood cells, has a role in detection of infection and activation of the humoral immune response. This chain is Phagocyte signaling-impaired protein, found in Drosophila pseudoobscura pseudoobscura (Fruit fly).